The primary structure comprises 333 residues: tRNA N6-adenosine threonylcarbamoyltransferase (333 aa).

The Fe cation site is built by His111 and His115. Substrate is bound by residues 134-138, Asp167, Gly180, and Asn272; that span reads LVSGG. A Fe cation-binding site is contributed by Asp300.

It belongs to the KAE1 / TsaD family. The cofactor is Fe(2+).

The protein resides in the cytoplasm. It carries out the reaction L-threonylcarbamoyladenylate + adenosine(37) in tRNA = N(6)-L-threonylcarbamoyladenosine(37) in tRNA + AMP + H(+). Required for the formation of a threonylcarbamoyl group on adenosine at position 37 (t(6)A37) in tRNAs that read codons beginning with adenine. Is involved in the transfer of the threonylcarbamoyl moiety of threonylcarbamoyl-AMP (TC-AMP) to the N6 group of A37, together with TsaE and TsaB. TsaD likely plays a direct catalytic role in this reaction. The sequence is that of tRNA N6-adenosine threonylcarbamoyltransferase from Legionella pneumophila (strain Lens).